Consider the following 468-residue polypeptide: GDNF family receptor alpha-1 (468 aa).

Residues 1 to 24 (MFLATLYFVLPLLDLLMSAEVSGG) form the signal peptide. Repeat copies occupy residues 25 to 113 (DRLD…LQGN), 150 to 238 (KGNN…YEER), and 239 to 342 (ERPN…KNAI). Cys36 and Cys42 are joined by a disulfide. A glycan (N-linked (GlcNAc...) asparagine) is linked at Asn59. 10 disulfide bridges follow: Cys154/Cys214, Cys161/Cys167, Cys178/Cys192, Cys187/Cys233, Cys216/Cys221, Cys243/Cys313, Cys250/Cys256, Cys267/Cys285, Cys277/Cys337, and Cys315/Cys325. Residues Asn347 and Asn406 are each glycosylated (N-linked (GlcNAc...) asparagine). Ser430 carries the GPI-anchor amidated serine lipid modification. Positions 431–468 (HITTKSMAAPPSCGLSSLPVMVFTALAALLSVSLAETS) are cleaved as a propeptide — removed in mature form.

Belongs to the GDNFR family. Interacts with GDNF ligand and RET: forms a 2:2:2 ternary complex composed of GDNF ligand, GFRA1 and RET receptor. Interacts with SORL1, either alone or in complex with GDNF. Interaction between SORL1 and GFRA1 leads to GFRA1 internalization, but not degradation. Expressed in the brain, in hippocampal neurons (at protein level). Isoform 1 and isoform 2 are expressed in heart, brain, lung, liver, kidney and testis.

Its subcellular location is the cell membrane. The protein resides in the golgi apparatus. It is found in the trans-Golgi network. The protein localises to the endosome. It localises to the multivesicular body. Coreceptor for GDNF, a neurotrophic factor that enhances survival and morphological differentiation of dopaminergic neurons and increases their high-affinity dopamine uptake. GDNF-binding leads to autophosphorylation and activation of the RET receptor. This is GDNF family receptor alpha-1 (Gfra1) from Mus musculus (Mouse).